The sequence spans 688 residues: PTS system glucoside-specific EIICBA component (688 aa).

A PTS EIIC type-1 domain is found at 3–427 (KKLFGQLQRI…FKLKTPGRED (425 aa)). 10 helical membrane passes run 12 to 32 (IGKA…LLAF), 81 to 101 (LGLA…YLIM), 137 to 157 (LVLG…MGAL), 182 to 202 (FVPI…SFAW), 223 to 243 (LTTF…LHHI), 284 to 304 (AFTT…AFAI), 315 to 335 (VVGG…ITEP), 340 to 360 (FLFV…TSFL), 364 to 384 (LLGV…ILYG), and 395 to 415 (LVIP…DFAI). The PTS EIIB type-1 domain occupies 438–519 (AKLPFDVLDA…AKIMSGEITK (82 aa)). Cys460 serves as the catalytic Phosphocysteine intermediate; for EIIB activity. The 105-residue stretch at 560 to 664 (DQVFAGKMMG…SIVTPMIITN (105 aa)) folds into the PTS EIIA type-1 domain. His612 serves as the catalytic Tele-phosphohistidine intermediate; for EIIA activity.

It localises to the cell membrane. Functionally, the phosphoenolpyruvate-dependent sugar phosphotransferase system (sugar PTS), a major carbohydrate active -transport system, catalyzes the phosphorylation of incoming sugar substrates concomitantly with their translocation across the cell membrane. This system is involved in alpha- and beta-glucoside transport. The polypeptide is PTS system glucoside-specific EIICBA component (glcB) (Staphylococcus aureus (strain USA300)).